A 112-amino-acid polypeptide reads, in one-letter code: Putative membrane protein insertion efficiency factor (112 aa).

Belongs to the UPF0161 family.

The protein resides in the cell inner membrane. In terms of biological role, could be involved in insertion of integral membrane proteins into the membrane. This chain is Putative membrane protein insertion efficiency factor, found in Bradyrhizobium diazoefficiens (strain JCM 10833 / BCRC 13528 / IAM 13628 / NBRC 14792 / USDA 110).